We begin with the raw amino-acid sequence, 107 residues long: Thioredoxin (107 aa).

The 106-residue stretch at 2-107 (DSIVHVTDDS…QLTAFLDSNX (106 aa)) folds into the Thioredoxin domain. An intrachain disulfide couples cysteine 32 to cysteine 35.

Belongs to the thioredoxin family.

Its function is as follows. Participates in various redox reactions through the reversible oxidation of its active center dithiol to a disulfide and catalyzes dithiol-disulfide exchange reactions. The chain is Thioredoxin (trxA) from Allochromatium vinosum (Chromatium vinosum).